Reading from the N-terminus, the 339-residue chain is Phenylalanine--tRNA ligase alpha subunit (339 aa).

Residue glutamate 250 participates in Mg(2+) binding.

It belongs to the class-II aminoacyl-tRNA synthetase family. Phe-tRNA synthetase alpha subunit type 1 subfamily. Tetramer of two alpha and two beta subunits. The cofactor is Mg(2+).

It is found in the cytoplasm. It carries out the reaction tRNA(Phe) + L-phenylalanine + ATP = L-phenylalanyl-tRNA(Phe) + AMP + diphosphate + H(+). This is Phenylalanine--tRNA ligase alpha subunit from Flavobacterium psychrophilum (strain ATCC 49511 / DSM 21280 / CIP 103535 / JIP02/86).